A 141-amino-acid chain; its full sequence is Hemoglobin subunit alpha (141 aa).

The Globin domain maps to 1–141 (VLSSTDKSNV…VSTVLTSKYR (141 aa)). A Phosphoserine modification is found at serine 3. Residues lysine 7 and lysine 11 each carry the N6-succinyllysine modification. Residue lysine 16 is modified to N6-acetyllysine; alternate. Lysine 16 is subject to N6-succinyllysine; alternate. A Phosphotyrosine modification is found at tyrosine 24. Serine 35 is modified (phosphoserine). Position 40 is an N6-succinyllysine (lysine 40). An O2-binding site is contributed by histidine 58. Histidine 87 lines the heme b pocket. Residue serine 102 is modified to Phosphoserine. At threonine 108 the chain carries Phosphothreonine. Phosphoserine is present on residues serine 124 and serine 131. Residues threonine 134 and threonine 137 each carry the phosphothreonine modification. Phosphoserine is present on serine 138.

This sequence belongs to the globin family. As to quaternary structure, heterotetramer of two alpha chains and two beta chains. In terms of tissue distribution, red blood cells.

Functionally, involved in oxygen transport from the lung to the various peripheral tissues. Hemopressin acts as an antagonist peptide of the cannabinoid receptor CNR1. Hemopressin-binding efficiently blocks cannabinoid receptor CNR1 and subsequent signaling. The polypeptide is Hemoglobin subunit alpha (HBA) (Pteropus alecto (Black flying fox)).